Reading from the N-terminus, the 332-residue chain is Aspartate carbamoyltransferase catalytic subunit (332 aa).

Residues R54 and T55 each contribute to the carbamoyl phosphate site. Residue K82 coordinates L-aspartate. The carbamoyl phosphate site is built by R104, H134, and Q137. L-aspartate contacts are provided by R175 and R230. Positions 271 and 272 each coordinate carbamoyl phosphate. Residues 312-332 (GGPDGDSTTSPGSGPEGGTTP) form a disordered region.

The protein belongs to the aspartate/ornithine carbamoyltransferase superfamily. ATCase family. In terms of assembly, heterododecamer (2C3:3R2) of six catalytic PyrB chains organized as two trimers (C3), and six regulatory PyrI chains organized as three dimers (R2).

The enzyme catalyses carbamoyl phosphate + L-aspartate = N-carbamoyl-L-aspartate + phosphate + H(+). The protein operates within pyrimidine metabolism; UMP biosynthesis via de novo pathway; (S)-dihydroorotate from bicarbonate: step 2/3. Its function is as follows. Catalyzes the condensation of carbamoyl phosphate and aspartate to form carbamoyl aspartate and inorganic phosphate, the committed step in the de novo pyrimidine nucleotide biosynthesis pathway. In Beutenbergia cavernae (strain ATCC BAA-8 / DSM 12333 / CCUG 43141 / JCM 11478 / NBRC 16432 / NCIMB 13614 / HKI 0122), this protein is Aspartate carbamoyltransferase catalytic subunit.